The primary structure comprises 182 residues: Ribulose bisphosphate carboxylase small subunit, chloroplastic 3 (182 aa).

A chloroplast-targeting transit peptide spans 1–41 (MASIMMNKSVVLSKECAKPLASPKVTLNKRGFATTIATKNR).

Belongs to the RuBisCO small chain family. As to quaternary structure, heterohexadecamer of 8 large and 8 small subunits.

It localises to the plastid. It is found in the chloroplast. Its function is as follows. RuBisCO catalyzes two reactions: the carboxylation of D-ribulose 1,5-bisphosphate, the primary event in carbon dioxide fixation, as well as the oxidative fragmentation of the pentose substrate. Both reactions occur simultaneously and in competition at the same active site. Although the small subunit is not catalytic it is essential for maximal activity. This chain is Ribulose bisphosphate carboxylase small subunit, chloroplastic 3, found in Acetabularia acetabulum (Mermaid's wine glass).